The chain runs to 448 residues: Phosphoglucosamine mutase (448 aa).

Ser-100 acts as the Phosphoserine intermediate in catalysis. Ser-100, Asp-240, Asp-242, and Asp-244 together coordinate Mg(2+). Ser-100 is subject to Phosphoserine.

It belongs to the phosphohexose mutase family. It depends on Mg(2+) as a cofactor. In terms of processing, activated by phosphorylation.

The catalysed reaction is alpha-D-glucosamine 1-phosphate = D-glucosamine 6-phosphate. Functionally, catalyzes the conversion of glucosamine-6-phosphate to glucosamine-1-phosphate. The chain is Phosphoglucosamine mutase from Bacillus anthracis (strain A0248).